A 391-amino-acid polypeptide reads, in one-letter code: Xylose isomerase (391 aa).

Active-site residues include His-54 and Asp-57. Mg(2+) contacts are provided by Glu-181, Glu-217, His-220, Asp-245, Asp-255, Asp-257, and Asp-287.

It belongs to the xylose isomerase family. In terms of assembly, homotetramer. Mg(2+) serves as cofactor.

Its subcellular location is the cytoplasm. It carries out the reaction alpha-D-xylose = alpha-D-xylulofuranose. Involved in D-xylose catabolism. The sequence is that of Xylose isomerase (xylA) from Streptomyces albus G.